Here is a 737-residue protein sequence, read N- to C-terminus: Methylcrotonoyl-CoA carboxylase subunit alpha, mitochondrial (737 aa).

The transit peptide at 1 to 33 directs the protein to the mitochondrion; that stretch reads MASRLLLLPRRRSRHGGASLLLARLLSSSSSEA. The region spanning 38 to 485 is the Biotin carboxylation domain; that stretch reads AVEKVLVANR…DTHFIERYQN (448 aa). Residues Lys-153, 185–246, Glu-237, and His-272 contribute to the ATP site; that span reads ANKI…PRHI. Positions 157–355 constitute an ATP-grasp domain; the sequence is KRIMGAAGVP…LVEWQIRIAN (199 aa). Mn(2+) is bound by residues Glu-312, Glu-326, and Asn-328. Residue Arg-330 is part of the active site. The segment at 636–665 is disordered; sequence YRQTLRAEQSPDDSSQPSASSEARSHPKGS. Residues 647 to 657 are compositionally biased toward low complexity; it reads DDSSQPSASSE. One can recognise a Biotinyl-binding domain in the interval 656–732; that stretch reads SEARSHPKGS…FDSSVLFTVK (77 aa). Position 698 is an N6-biotinyllysine (Lys-698).

Probably a heterodimer composed of biotin-containing alpha subunits and beta subunits. Requires biotin as cofactor. The cofactor is Mn(2+).

It is found in the mitochondrion matrix. It catalyses the reaction 3-methylbut-2-enoyl-CoA + hydrogencarbonate + ATP = 3-methyl-(2E)-glutaconyl-CoA + ADP + phosphate + H(+). It participates in amino-acid degradation; L-leucine degradation; (S)-3-hydroxy-3-methylglutaryl-CoA from 3-isovaleryl-CoA: step 2/3. Functionally, biotin-attachment subunit of the 3-methylcrotonyl-CoA carboxylase, an enzyme that catalyzes the conversion of 3-methylcrotonyl-CoA to 3-methylglutaconyl-CoA, a critical step for leucine and isovaleric acid catabolism. The sequence is that of Methylcrotonoyl-CoA carboxylase subunit alpha, mitochondrial (MCCA) from Oryza sativa subsp. japonica (Rice).